The following is a 467-amino-acid chain: Actinorhodin polyketide putative beta-ketoacyl synthase 1 (467 aa).

The disordered stretch occupies residues 1–35 (MPLDAAPVDPASRGPVSAFEPPSSHGADDDDDHRT). In terms of domain architecture, Ketosynthase family 3 (KS3) spans 45–459 (KRRVVITGVG…GFQSAMVLRD (415 aa)). Active-site for beta-ketoacyl synthase activity residues include Cys-212, His-352, and His-389.

The protein belongs to the thiolase-like superfamily. Beta-ketoacyl-ACP synthases family.

It functions in the pathway antibiotic biosynthesis; actinorhodin biosynthesis. This is Actinorhodin polyketide putative beta-ketoacyl synthase 1 from Streptomyces coelicolor (strain ATCC BAA-471 / A3(2) / M145).